The following is a 490-amino-acid chain: Cysteine desulfurase, mitochondrial (490 aa).

Pyridoxal 5'-phosphate-binding positions include 161-162 (AT), N241, Q269, and 289-291 (SSH). K292 carries the N6-(pyridoxal phosphate)lysine modification. T329 is a binding site for pyridoxal 5'-phosphate. The Cysteine persulfide intermediate role is filled by C414. C414 provides a ligand contact to [2Fe-2S] cluster.

This sequence belongs to the class-V pyridoxal-phosphate-dependent aminotransferase family. NifS/IscS subfamily. It depends on pyridoxal 5'-phosphate as a cofactor.

The protein localises to the mitochondrion. The catalysed reaction is (sulfur carrier)-H + L-cysteine = (sulfur carrier)-SH + L-alanine. Functionally, catalyzes the removal of elemental sulfur from cysteine to produce alanine. It supplies the inorganic sulfur for iron-sulfur (Fe-S) clusters. Plays a role in both tRNA-processing and mitochondrial metabolism. Involved in the 2-thio-modification of both 5-carboxymethylaminomethyl-2-thiouridine in mitochondrial tRNAs and 5-methoxycarbonylmethyl-2-thiouridine (mcm5s2U) in cytoplasmic tRNAs. This chain is Cysteine desulfurase, mitochondrial, found in Eremothecium gossypii (strain ATCC 10895 / CBS 109.51 / FGSC 9923 / NRRL Y-1056) (Yeast).